A 489-amino-acid chain; its full sequence is Lysine--tRNA ligase (489 aa).

The Mg(2+) site is built by glutamate 399 and glutamate 406.

This sequence belongs to the class-II aminoacyl-tRNA synthetase family. As to quaternary structure, homodimer. It depends on Mg(2+) as a cofactor.

The protein localises to the cytoplasm. It catalyses the reaction tRNA(Lys) + L-lysine + ATP = L-lysyl-tRNA(Lys) + AMP + diphosphate. The polypeptide is Lysine--tRNA ligase (Synechococcus sp. (strain CC9311)).